The following is a 358-amino-acid chain: DnaJ homolog subfamily C member 18 (358 aa).

A J domain is found at 82-146 (NYYEILGVSR…DKRLRYDEYG (65 aa)). The chain crosses the membrane as a helical span at residues 228 to 248 (AFIQLLPVLVIVIISVITQLL).

It is found in the endoplasmic reticulum membrane. In Macaca fascicularis (Crab-eating macaque), this protein is DnaJ homolog subfamily C member 18 (DNAJC18).